Here is a 46-residue protein sequence, read N- to C-terminus: Cysteine-rich venom protein asurin-1 (46 aa).

It belongs to the CRISP family. Post-translationally, contains 8 disulfide bonds. In terms of tissue distribution, expressed by the venom gland.

It localises to the secreted. Its function is as follows. Blocks contraction of smooth muscle elicited by high potassium-induced depolarization, but does not block caffeine-stimulated contraction. May target voltage-gated calcium channels on smooth muscle. This chain is Cysteine-rich venom protein asurin-1, found in Austrelaps superbus (Lowland copperhead snake).